The following is a 1161-amino-acid chain: Auxin response factor 19 (1161 aa).

Residues 1 to 20 (MMKQAQQQPPPPPASSAATT) are disordered. Positions 154-256 (FCKTLTASDT…QLLLGIRRAN (103 aa)) form a DNA-binding region, TF-B3. Positions 573-598 (NQMQQQHASSTQGQQPATSQPLLLPQ) are disordered. The 85-residue stretch at 1027-1111 (RTFTKVYKRG…KCIRILSPQE (85 aa)) folds into the PB1 domain.

It belongs to the ARF family. As to quaternary structure, homodimers and heterodimers. Expressed in roots, culms, leaves and young panicles.

It localises to the nucleus. Functionally, auxin response factors (ARFs) are transcriptional factors that bind specifically to the DNA sequence 5'-TGTCTC-3' found in the auxin-responsive promoter elements (AuxREs). This Oryza sativa subsp. japonica (Rice) protein is Auxin response factor 19 (ARF19).